The following is a 683-amino-acid chain: DNA ligase (683 aa).

NAD(+)-binding positions include 42-46 (DAEYD), 91-92 (SL), and E122. K124 functions as the N6-AMP-lysine intermediate in the catalytic mechanism. 4 residues coordinate NAD(+): R145, E182, K299, and K323. Zn(2+) is bound by residues C417, C420, C435, and C441. One can recognise a BRCT domain in the interval 602–683 (APQGVLAGKT…MRKLLEGQTT (82 aa)).

The protein belongs to the NAD-dependent DNA ligase family. LigA subfamily. Mg(2+) is required as a cofactor. Requires Mn(2+) as cofactor.

The catalysed reaction is NAD(+) + (deoxyribonucleotide)n-3'-hydroxyl + 5'-phospho-(deoxyribonucleotide)m = (deoxyribonucleotide)n+m + AMP + beta-nicotinamide D-nucleotide.. In terms of biological role, DNA ligase that catalyzes the formation of phosphodiester linkages between 5'-phosphoryl and 3'-hydroxyl groups in double-stranded DNA using NAD as a coenzyme and as the energy source for the reaction. It is essential for DNA replication and repair of damaged DNA. The protein is DNA ligase of Paraburkholderia phymatum (strain DSM 17167 / CIP 108236 / LMG 21445 / STM815) (Burkholderia phymatum).